A 475-amino-acid polypeptide reads, in one-letter code: UDP-N-acetylmuramate--L-alanine ligase (475 aa).

An ATP-binding site is contributed by 114-120 (GTHGKTT).

It belongs to the MurCDEF family.

It localises to the cytoplasm. The catalysed reaction is UDP-N-acetyl-alpha-D-muramate + L-alanine + ATP = UDP-N-acetyl-alpha-D-muramoyl-L-alanine + ADP + phosphate + H(+). It participates in cell wall biogenesis; peptidoglycan biosynthesis. In terms of biological role, cell wall formation. The polypeptide is UDP-N-acetylmuramate--L-alanine ligase (Bartonella tribocorum (strain CIP 105476 / IBS 506)).